Consider the following 236-residue polypeptide: Syntaxin-8 (236 aa).

Residues 1–215 (MAPDPWFSTY…LVDRKSTSCG (215 aa)) are Cytoplasmic-facing. Residues 42–65 (VTIRALLQKLKEKIALLKDLLLRA) are a coiled coil. In terms of domain architecture, t-SNARE coiled-coil homology spans 145–207 (QKIIQEQDAG…RTETRRVNLV (63 aa)). Position 160 is a phosphoserine (Ser160). The chain crosses the membrane as a helical; Anchor for type IV membrane protein span at residues 216-232 (MIMVILLLLVAIVVVAV). At 233–236 (WPTK) the chain is on the vesicular side.

This sequence belongs to the syntaxin family. Forms a SNARE complex with STX7, VTI1B and VAMP8 which functions in the homotypic fusion of late endosomes. Part of the SNARE core complex containing STX7, VAMP8 and VTI1B. Interacts with VAMP8. Interacts with HECTD3. Interacts with TPC1. Ubiquitinated by HECTD3.

Its subcellular location is the membrane. Vesicle trafficking protein that functions in the early secretory pathway, possibly by mediating retrograde transport from cis-Golgi membranes to the ER. This chain is Syntaxin-8 (STX8), found in Bos taurus (Bovine).